The sequence spans 116 residues: Vesicle-associated membrane protein 5 (116 aa).

Over 1–72 (MAGKELERCQ…RWENARCRIY (72 aa)) the chain is Cytoplasmic. Positions 5–65 (ELERCQRQAD…KTLAQKKRWE (61 aa)) constitute a v-SNARE coiled-coil homology domain. A phosphoserine mark is found at Ser-41, Ser-48, and Ser-49. Residues 73-93 (MGLAVGIALLILLIVLLVIFL) form a helical; Anchor for type IV membrane protein membrane-spanning segment. At 94–116 (PQSSKGSSAPQVQDAGPASGPGE) the chain is on the vesicular side. The interval 97–116 (SKGSSAPQVQDAGPASGPGE) is disordered.

The protein belongs to the synaptobrevin family.

Its subcellular location is the cell membrane. It is found in the endomembrane system. The protein resides in the golgi apparatus. It localises to the trans-Golgi network membrane. Functionally, may participate in trafficking events that are associated with myogenesis, such as myoblast fusion and/or GLUT4 trafficking. The polypeptide is Vesicle-associated membrane protein 5 (VAMP5) (Bos taurus (Bovine)).